A 387-amino-acid chain; its full sequence is Protein mab-21-like 3 (387 aa).

This sequence belongs to the mab-21 family.

This chain is Protein mab-21-like 3 (mab21L3), found in Danio rerio (Zebrafish).